A 508-amino-acid chain; its full sequence is Cytochrome c-552 (508 aa).

The first 23 residues, 1–23, serve as a signal peptide directing secretion; sequence MNKSYKILLTGSVIAIGAMGLMA. H103 is a heme c binding site. 3 residues coordinate heme: C131, C134, and K135. Positions 169, 172, 173, 211, 214, and 215 each coordinate heme c. Ca(2+) is bound by residues E217, Y218, K274, and Q276. Residue Y218 participates in substrate binding. H277 is a substrate binding site. Residues H288, C295, C298, H299, H313, C326, C329, H330, and H405 each contribute to the heme c site. The segment at 485–508 is disordered; it reads GRLDPKTLEGMSNKSSWSQTELSQ. Residues 494 to 508 are compositionally biased toward polar residues; it reads GMSNKSSWSQTELSQ.

Belongs to the cytochrome c-552 family. The cofactor is Ca(2+). It depends on heme c as a cofactor.

It is found in the periplasm. The catalysed reaction is 6 Fe(III)-[cytochrome c] + NH4(+) + 2 H2O = 6 Fe(II)-[cytochrome c] + nitrite + 8 H(+). It functions in the pathway nitrogen metabolism; nitrate reduction (assimilation). In terms of biological role, catalyzes the reduction of nitrite to ammonia, consuming six electrons in the process. The polypeptide is Cytochrome c-552 (Desulfotalea psychrophila (strain LSv54 / DSM 12343)).